The sequence spans 291 residues: ATP synthase gamma chain (291 aa).

This sequence belongs to the ATPase gamma chain family. F-type ATPases have 2 components, CF(1) - the catalytic core - and CF(0) - the membrane proton channel. CF(1) has five subunits: alpha(3), beta(3), gamma(1), delta(1), epsilon(1). CF(0) has three main subunits: a, b and c.

The protein resides in the cell inner membrane. In terms of biological role, produces ATP from ADP in the presence of a proton gradient across the membrane. The gamma chain is believed to be important in regulating ATPase activity and the flow of protons through the CF(0) complex. The chain is ATP synthase gamma chain from Neisseria meningitidis serogroup C (strain 053442).